We begin with the raw amino-acid sequence, 162 residues long: 2-C-methyl-D-erythritol 2,4-cyclodiphosphate synthase (162 aa).

The a divalent metal cation site is built by aspartate 10 and histidine 12. 4-CDP-2-C-methyl-D-erythritol 2-phosphate-binding positions include 10–12 (DVH) and 36–37 (HS). An a divalent metal cation-binding site is contributed by histidine 44. Residues 58-60 (DIG), 63-67 (FPDTD), 102-108 (AQAPRMA), 134-137 (TTSE), phenylalanine 141, and arginine 144 each bind 4-CDP-2-C-methyl-D-erythritol 2-phosphate.

This sequence belongs to the IspF family. As to quaternary structure, homotrimer. A divalent metal cation is required as a cofactor.

It catalyses the reaction 4-CDP-2-C-methyl-D-erythritol 2-phosphate = 2-C-methyl-D-erythritol 2,4-cyclic diphosphate + CMP. The protein operates within isoprenoid biosynthesis; isopentenyl diphosphate biosynthesis via DXP pathway; isopentenyl diphosphate from 1-deoxy-D-xylulose 5-phosphate: step 4/6. Involved in the biosynthesis of isopentenyl diphosphate (IPP) and dimethylallyl diphosphate (DMAPP), two major building blocks of isoprenoid compounds. Catalyzes the conversion of 4-diphosphocytidyl-2-C-methyl-D-erythritol 2-phosphate (CDP-ME2P) to 2-C-methyl-D-erythritol 2,4-cyclodiphosphate (ME-CPP) with a corresponding release of cytidine 5-monophosphate (CMP). This is 2-C-methyl-D-erythritol 2,4-cyclodiphosphate synthase from Chromohalobacter salexigens (strain ATCC BAA-138 / DSM 3043 / CIP 106854 / NCIMB 13768 / 1H11).